A 460-amino-acid polypeptide reads, in one-letter code: MENFWQACSAQLEQELTPQQYSAWIKPLTPLDYEDGTLRIAAPNRFKLDWVKTQFASRITSIAAQFWEVPVEVQFVLDPRLVAARRPAAQASVVSDRADDVPSNVLEPIPSNATDHTPRRDQSRINTALTFDSFVTGKANQLARAAAIQVANNPGSSYNPLFLYGGVGLGKTHLIHAIGNQVLADNPNVKIRYIHAEQYVRDVVTAYQRKGFDDFKRYYHSLDLLLIDDIQFFGGKSRTQEEFFYAFEALIAAKKQIIITSDTYPKEITGMDDRLISRFDSGLTVAVEPPELEMRVAILLKKAVQEGVTFSDDVAFFVAKHLRSNVRELEGALRKILAYSRFHGKDITIEVVKDALKDLLSVQNRQISVENIQKTVADFFNIKVADMYSKKRPANIARPRQIAMYLAKELTQKSLPEIGELFGGRDHTTVLHAVRKIAADRGKSPECNHELHVLEQTLKG.

The domain I, interacts with DnaA modulators stretch occupies residues 1–78 (MENFWQACSA…VPVEVQFVLD (78 aa)). Residues 78–123 (DPRLVAARRPAAQASVVSDRADDVPSNVLEPIPSNATDHTPRRDQS) are domain II. The segment at 124 to 340 (RINTALTFDS…GALRKILAYS (217 aa)) is domain III, AAA+ region. Residues glycine 168, glycine 170, lysine 171, and threonine 172 each contribute to the ATP site. Residues 341-460 (RFHGKDITIE…LHVLEQTLKG (120 aa)) form a domain IV, binds dsDNA region.

Belongs to the DnaA family. Oligomerizes as a right-handed, spiral filament on DNA at oriC.

It localises to the cytoplasm. Its function is as follows. Plays an essential role in the initiation and regulation of chromosomal replication. ATP-DnaA binds to the origin of replication (oriC) to initiate formation of the DNA replication initiation complex once per cell cycle. Binds the DnaA box (a 9 base pair repeat at the origin) and separates the double-stranded (ds)DNA. Forms a right-handed helical filament on oriC DNA; dsDNA binds to the exterior of the filament while single-stranded (ss)DNA is stabiized in the filament's interior. The ATP-DnaA-oriC complex binds and stabilizes one strand of the AT-rich DNA unwinding element (DUE), permitting loading of DNA polymerase. After initiation quickly degrades to an ADP-DnaA complex that is not apt for DNA replication. Binds acidic phospholipids. The protein is Chromosomal replication initiator protein DnaA of Herminiimonas arsenicoxydans.